The following is a 355-amino-acid chain: Protein RecA (355 aa).

67-74 (GPESSGKT) serves as a coordination point for ATP.

Belongs to the RecA family.

It localises to the cytoplasm. Functionally, can catalyze the hydrolysis of ATP in the presence of single-stranded DNA, the ATP-dependent uptake of single-stranded DNA by duplex DNA, and the ATP-dependent hybridization of homologous single-stranded DNAs. It interacts with LexA causing its activation and leading to its autocatalytic cleavage. In Shewanella baltica (strain OS223), this protein is Protein RecA.